Here is an 806-residue protein sequence, read N- to C-terminus: DNA topoisomerase 4 subunit A (806 aa).

One can recognise a Topo IIA-type catalytic domain in the interval 33-499 (LPDARDGLKP…EEIKINLEVM (467 aa)). Tyr121 acts as the O-(5'-phospho-DNA)-tyrosine intermediate in catalysis.

This sequence belongs to the type II topoisomerase GyrA/ParC subunit family. ParC type 2 subfamily. In terms of assembly, heterotetramer composed of ParC and ParE.

The protein localises to the cell membrane. The protein resides in the cytoplasm. It carries out the reaction ATP-dependent breakage, passage and rejoining of double-stranded DNA.. Functionally, topoisomerase IV is essential for chromosome segregation. It relaxes supercoiled DNA. Performs the decatenation events required during the replication of a circular DNA molecule. This chain is DNA topoisomerase 4 subunit A, found in Bacillus subtilis (strain 168).